Here is a 453-residue protein sequence, read N- to C-terminus: Ribosomal protein uS12 methylthiotransferase RimO (453 aa).

Residues 9–124 (PKIGFVSLGC…VMDAVHKHMP (116 aa)) enclose the MTTase N-terminal domain. Residues C18, C54, C83, C155, C159, and C162 each coordinate [4Fe-4S] cluster. One can recognise a Radical SAM core domain in the interval 141–382 (LTPKHFAYLK…MLLQEEISKK (242 aa)). Residues 385–453 (QAKVGKTMRV…ADAHDLWAEA (69 aa)) enclose the TRAM domain.

The protein belongs to the methylthiotransferase family. RimO subfamily. [4Fe-4S] cluster serves as cofactor.

Its subcellular location is the cytoplasm. The enzyme catalyses L-aspartate(89)-[ribosomal protein uS12]-hydrogen + (sulfur carrier)-SH + AH2 + 2 S-adenosyl-L-methionine = 3-methylsulfanyl-L-aspartate(89)-[ribosomal protein uS12]-hydrogen + (sulfur carrier)-H + 5'-deoxyadenosine + L-methionine + A + S-adenosyl-L-homocysteine + 2 H(+). Catalyzes the methylthiolation of an aspartic acid residue of ribosomal protein uS12. The sequence is that of Ribosomal protein uS12 methylthiotransferase RimO from Janthinobacterium sp. (strain Marseille) (Minibacterium massiliensis).